The following is a 309-amino-acid chain: 4-hydroxy-3-methylbut-2-enyl diphosphate reductase (309 aa).

A [4Fe-4S] cluster-binding site is contributed by Cys13. (2E)-4-hydroxy-3-methylbut-2-enyl diphosphate-binding residues include His42 and His75. Dimethylallyl diphosphate is bound by residues His42 and His75. The isopentenyl diphosphate site is built by His42 and His75. Cys97 provides a ligand contact to [4Fe-4S] cluster. His125 is a binding site for (2E)-4-hydroxy-3-methylbut-2-enyl diphosphate. His125 serves as a coordination point for dimethylallyl diphosphate. His125 lines the isopentenyl diphosphate pocket. Glu127 serves as the catalytic Proton donor. Thr165 is a binding site for (2E)-4-hydroxy-3-methylbut-2-enyl diphosphate. A [4Fe-4S] cluster-binding site is contributed by Cys195. Positions 223, 224, 225, and 267 each coordinate (2E)-4-hydroxy-3-methylbut-2-enyl diphosphate. Dimethylallyl diphosphate contacts are provided by Ser223, Ser224, Asn225, and Ser267. Positions 223, 224, 225, and 267 each coordinate isopentenyl diphosphate.

The protein belongs to the IspH family. [4Fe-4S] cluster serves as cofactor.

The catalysed reaction is isopentenyl diphosphate + 2 oxidized [2Fe-2S]-[ferredoxin] + H2O = (2E)-4-hydroxy-3-methylbut-2-enyl diphosphate + 2 reduced [2Fe-2S]-[ferredoxin] + 2 H(+). It carries out the reaction dimethylallyl diphosphate + 2 oxidized [2Fe-2S]-[ferredoxin] + H2O = (2E)-4-hydroxy-3-methylbut-2-enyl diphosphate + 2 reduced [2Fe-2S]-[ferredoxin] + 2 H(+). The protein operates within isoprenoid biosynthesis; dimethylallyl diphosphate biosynthesis; dimethylallyl diphosphate from (2E)-4-hydroxy-3-methylbutenyl diphosphate: step 1/1. It participates in isoprenoid biosynthesis; isopentenyl diphosphate biosynthesis via DXP pathway; isopentenyl diphosphate from 1-deoxy-D-xylulose 5-phosphate: step 6/6. Functionally, catalyzes the conversion of 1-hydroxy-2-methyl-2-(E)-butenyl 4-diphosphate (HMBPP) into a mixture of isopentenyl diphosphate (IPP) and dimethylallyl diphosphate (DMAPP). Acts in the terminal step of the DOXP/MEP pathway for isoprenoid precursor biosynthesis. The polypeptide is 4-hydroxy-3-methylbut-2-enyl diphosphate reductase (Chlamydia felis (strain Fe/C-56) (Chlamydophila felis)).